Here is a 310-residue protein sequence, read N- to C-terminus: Junctional adhesion molecule C (310 aa).

A signal peptide spans 1-31; it reads MALRRPPRLRLCARLPDFFLLLLFRGCLIGA. Topologically, residues 32-241 are extracellular; sequence VNLKSSNRTP…EQEMEVYDLN (210 aa). An Ig-like V-type domain is found at 35–127; it reads KSSNRTPVVQ…VARNDRKEID (93 aa). Cystine bridges form between Cys-53–Cys-115 and Cys-160–Cys-219. N-linked (GlcNAc...) asparagine glycosylation is found at Asn-104 and Asn-192. Positions 139–236 constitute an Ig-like C2-type domain; that stretch reads PVTPVCRVPK…SARCEEQEME (98 aa). The helical transmembrane segment at 242–262 threads the bilayer; it reads IGGIIGGVLVVLAVLALITLG. Over 263-310 the chain is Cytoplasmic; the sequence is ICCAYRRGYFINNKQDGESYKNPGKPDGVNYIRTDEEGDFRHKSSFVI. Residues Cys-264 and Cys-265 are each lipidated (S-palmitoyl cysteine).

Belongs to the immunoglobulin superfamily. In terms of assembly, interacts with ITGAM. Interacts with GORASP2. Post-translationally, proteolytically cleaved from endothelial cells surface into a soluble form by ADAM10 and ADAM17; the release of soluble JAM3 is increased by pro-inflammatory factors. S-palmitoylated by ZDHHC7. S-palmitoylation promotes expression at tight junctions. As to expression, detected on round and elongated spermatids (at protein level). Highest expression in placenta, brain and kidney. Significant expression is detected on platelets. Expressed in intestinal mucosa cells. Expressed in the vascular endothelium. Found in serum (at protein level). Also detected in the synovial fluid of patients with rheumatoid arthritis, psoriatic arthritis or ostearthritis (at protein level).

Its subcellular location is the cell membrane. The protein resides in the cell junction. It localises to the desmosome. The protein localises to the tight junction. It is found in the secreted. Its function is as follows. Junctional adhesion protein that mediates heterotypic cell-cell interactions with its cognate receptor JAM2 to regulate different cellular processes. Plays a role in homing and mobilization of hematopoietic stem and progenitor cells within the bone marrow. At the surface of bone marrow stromal cells, it contributes to the retention of the hematopoietic stem and progenitor cells expressing JAM3. Plays a central role in leukocytes extravasation by facilitating transmigration through the endothelium. Plays a role in spermatogenesis where JAM2 and JAM3, which are respectively expressed by Sertoli and germ cells, mediate an interaction between both cell types and play an essential role in the anchorage of germ cells onto Sertoli cells and the assembly of cell polarity complexes during spermatid differentiation. Also functions as a counter-receptor for ITGAM, mediating leukocyte-platelet interactions and is involved in the regulation of transepithelial migration of polymorphonuclear neutrophils (PMN). Plays a role in angiogenesis. Plays a role in the regulation of cell migration. During myogenesis, it is involved in myocyte fusion. Promotes chemotaxis of vascular endothelial cells and stimulates angiogenesis. In Homo sapiens (Human), this protein is Junctional adhesion molecule C (JAM3).